A 346-amino-acid chain; its full sequence is Cytidine deaminase 5 (346 aa).

CMP/dCMP-type deaminase domains lie at 20–148 (TDHK…FGSE) and 183–304 (DLCS…ITGA). 58-60 (NVE) contacts substrate. Histidine 71 lines the Zn(2+) pocket. Catalysis depends on glutamate 73, which acts as the Proton donor. Residues cysteine 104 and cysteine 107 each contribute to the Zn(2+) site.

This sequence belongs to the cytidine and deoxycytidylate deaminase family. In terms of assembly, homodimer. Zn(2+) is required as a cofactor.

It catalyses the reaction cytidine + H2O + H(+) = uridine + NH4(+). The enzyme catalyses 2'-deoxycytidine + H2O + H(+) = 2'-deoxyuridine + NH4(+). In terms of biological role, this enzyme scavenges exogenous and endogenous cytidine and 2'-deoxycytidine for UMP synthesis. This chain is Cytidine deaminase 5 (CDA5), found in Arabidopsis thaliana (Mouse-ear cress).